Here is a 502-residue protein sequence, read N- to C-terminus: Serine carboxypeptidase-like 40 (502 aa).

A signal peptide spans 1–24; sequence MRKGQGYSYSVIASVLVLLCVVVS. Asn103 and Asn187 each carry an N-linked (GlcNAc...) asparagine glycan. 3 disulfides stabilise this stretch: Cys136-Cys384, Cys293-Cys307, and Cys331-Cys352. Residue Ser229 is part of the active site. N-linked (GlcNAc...) asparagine glycans are attached at residues Asn333 and Asn373. Asp420 is a catalytic residue. Asn436 carries N-linked (GlcNAc...) asparagine glycosylation. Residue His473 is part of the active site.

This sequence belongs to the peptidase S10 family. In terms of tissue distribution, expressed in roots, leaves, flowers and siliques.

The protein resides in the secreted. In terms of biological role, probable carboxypeptidase. This chain is Serine carboxypeptidase-like 40 (SCPL40), found in Arabidopsis thaliana (Mouse-ear cress).